Consider the following 125-residue polypeptide: Large ribosomal subunit protein bL17 (125 aa).

This sequence belongs to the bacterial ribosomal protein bL17 family. In terms of assembly, part of the 50S ribosomal subunit. Contacts protein L32.

The sequence is that of Large ribosomal subunit protein bL17 from Acinetobacter baumannii (strain AB0057).